Here is a 391-residue protein sequence, read N- to C-terminus: Squalene synthase 8 (391 aa).

Belongs to the phytoene/squalene synthase family. It depends on Mg(2+) as a cofactor. The cofactor is Mn(2+).

Its subcellular location is the endoplasmic reticulum. It carries out the reaction 2 (2E,6E)-farnesyl diphosphate + NADH + H(+) = squalene + 2 diphosphate + NAD(+). The enzyme catalyses 2 (2E,6E)-farnesyl diphosphate + NADPH + H(+) = squalene + 2 diphosphate + NADP(+). It participates in terpene metabolism; lanosterol biosynthesis; lanosterol from farnesyl diphosphate: step 1/3. Its function is as follows. Component of the triterpene saponins (e.g. ginsenosides or panaxosides) and phytosterols biosynthetic pathways. Catalyzes the biosynthesis of squalene. The sequence is that of Squalene synthase 8 from Panax ginseng (Korean ginseng).